A 115-amino-acid polypeptide reads, in one-letter code: MEAKATAKFVRYTPRKVNQVLALIRNKKVEKTLEILSFLPKSTAVLVKKVLKSATANAGKFEDYSGLKVKEAWVGNGPILKRIRAGSKGRSMPIKKRTVHLTIIVTDASTYLRKK.

It belongs to the universal ribosomal protein uL22 family. As to quaternary structure, part of the 50S ribosomal subunit.

Its function is as follows. This protein binds specifically to 23S rRNA; its binding is stimulated by other ribosomal proteins, e.g. L4, L17, and L20. It is important during the early stages of 50S assembly. It makes multiple contacts with different domains of the 23S rRNA in the assembled 50S subunit and ribosome. In terms of biological role, the globular domain of the protein is located near the polypeptide exit tunnel on the outside of the subunit, while an extended beta-hairpin is found that lines the wall of the exit tunnel in the center of the 70S ribosome. This is Large ribosomal subunit protein uL22 from Endomicrobium trichonymphae.